A 10746-amino-acid chain; its full sequence is MNYRDKIQKFSIRKYTVGTFSTVIATLVFLGLNTSQAQAAETNQPASALKQKQQNGDTQTENREVEVQNSQNGQSLSAPIENEQPNNNQTNHVDASAVQSSTTEHDQPVSQNEQAKKDTAAATPTQSAKAASKHEQSESRAANKKENDNKATHVESHEANVVTASDSSDSGNVQHDRNELQAFFDANYHDYRFIDRENADSGTFNYVKGIFDKINTLLGSNDPINNKDLQLAYKELEQAVALIRTMPQRQQTSRRSSRIQTRSIESRAAEPRSVSDYQNANSSYYVENANDGSGYPVGTYINASSKGAPYNLPTTPWNTLKASDAKEIALITAKQTGDGYQWVIKFNKGHAPHENMIYWFALPAGQTPVGRTEFVTVNADGTNVQWSNGAGAGANKPLPEMWPYGVNDSRSWDYKIRNRSGQVIYDWPTVHINSLKDLARASDYFSEAGATPATKAFGRQTFEYINGERPTESPGVPKVYTFIGKGDASYTISFKTQGPTIDKLYYAAGGRALEYNQLFMYSQLYVESTQDYQQRLNGLRQVVNRTYRIGTTKRVEVSQGNVQTKKVLESTNLNIDDFMDDPLSYVKTPSNKVLGFYPTSANTNAFRPGGVNPLNEYQLSQLFTDDKLQQAARTGSPIRLMIGFDYPDAFGNGETLVPVNLTVLPEIQHNIKFFKNDDGQNIADKPASKQAGHPVFYVYAGNQGNASVNLGGSVTSIQPLRINLTSNENFTDKDWQITGIPRTLHIENSTNRTNNARERNIELVGNLLPGDYFGTIRFGRKEQLFEIRVKPHTPRITTTAEELRGTALQKVPVTVTDIPLDPSALVYLVIPTSQTRDGGSEADQIPSGYTKIATGTPDGVHSTITIRPEDYVVFIPPVGNQIRALIFYNNVVASNMSNAVTILPDDIPPTINNPVGLNAKYYRGDEVSFTMGVSDRHSGLKSTTITTLPSGWTSNLTKSDKKNGSLAISGRVSMNQAYNSDITFKVSATDNVNNTTNDSQSKHVTVHVGKISDDAHPIVLGNSEKVVVVNPTALTGDEKQRITTAFMNKNQNIRGYLASSNPVTVDNHGNVTLQYRDGSSTTLDATNVMTYEPVVKPEYQTANAAKTATVTIAKGQSFNIGDIKQYFTLSNGQAIPSSSFTNITSDRTIPTAQEVSQMNAGTQLYHIVATNAYHKDTEDFYITLKIIDVKQPEGDQRVYRMSTYDITTDEISKVKQAFINANRDAISFAEGDISVTNTPNGSNVSTITVNINKGRLTKSFTSNLNNMNFLRWVNFPQDYTVTWTNAKIANRPTDGGLSWSDDHKSLIYRYDATLGTQITTNDILTLLKATTTVPGLRNNIAGNEKAQAEAGGRPNYKTTGYSQSNPTSDGQRQFTLNGQVIQIMDIINPSNGFGGQPVTNSNVRANHSNSTVVSVNESAANGAGAFTIDHVVKNNSTHNAADAVYKAQLYLSPYGPKQYVEHLNQNTDNTNEAINIYFVPSDLVNPTISVGNYTNHQVFSGETFTNTITANDNFGVQSVTVPTTSQLTGTVDNNHQHVSATAPNVTSTTNKTINLVATDTSGNTATTSFNVTIKPLRDKYRVGTSSTAANPVRIANISNNATVSQADQTAIINSLTFTSNAPNRNYATASANEITSKTVSNVSRTGNNAQVTVTVTYQDGTTSTVTVPVKRVIPEIVAHSHYTVQGQDFPTGNGASASDYFKLSNGSAIPDATITWVSGQAPNKNNTTIGQDINVTAHILIDGETTPITKTATYKVVRTVPKQVFETARGVLYPGVSDMYDAKQYVKPVNNSWSTNAQHMNFQFTNSYGPSKDVVGISTRDIRVTYDNHQTQIIKILSKVKPDPPRIDGNSVTYKAGLTNQQIKINNVLSSSSIKLFKADNTPLTITNTTYGSGNTAVVTVSDALPNGEIKARSSISMNNVTYTTQDEHGRAIDVTRNESVDSNDSASVHVTPQLQATTEGAVFIKGGDGFDFGHVERFIQNPPHGATVAWHDNPDTWKNTVGNTHKTAVVTLPNGQGTRNVEVPVKVYPVANAKAPSRDVKGQNLTNGTDAINYITFDPNTNTNGITAVWANRQQPNNQQAGVQHLNVDVTYPGISAAKRVPVTVNVYQFEFPQTSYTTTVGGTLASGTQASGYAHIQNATGLPTDGFTYKWNNAATGTNDANWAAMNKPNTAQVINAKYDVIYNGHTFATSLPAKFVVKDVQPAKPTVTETAAGVITIAPGANQTVNTHAGNVTTYADKLVIKRNGNVVTTFTRHNNTSPWVKEASAANVAGIAGTNNGITVAAGTFNPADTIQAVATQGSGETISDEQRSDDFTVVAPQPNQATTKIWQNGHVDITPNNPSGHLINPTQAMDIAYTEKVGNGAEHSKTLNAVRGQNNQWTIANKPDYVTLDAHTGKVTFNANTIKPNSAITITPKAGTGHSASSNPSTLTAPAAHTVNTTEIVKDYGSNVTAAEINNAVQVANKRTATIKNGTAMPTNLAGGSTTTIPVTVTYNDSSTEEVQESIFTKADKRELITAKNHLDDPVSTDGKKPGTITQYNNAIHNAQQQINTAKTEAQQVINDERATPQQVNAALSKVQAAQTKINEAKALLQNKEDNSQLVTSKNNLQSSVNQVPSTTGMTQQSIDNYNAKKREAESEITAAQRVIDNGDATAQQISDEKHRVDNALTALNQAKQNLTADTHELEQAVHQLNRTGTTTGKKPASITAYNNSIRALQSDLTSAKNSANAIIQKPIRSVQEVQTALTNVNRVNDRLTLAINQLVPLADNSALRTAKTKLDEEINKSVTTDGMTQSSIQAYENAKRAGQTESTNAQNVINNGDATDQQIAAKKTKVEEKYNGLKQAIAGLTPDLAPLQAAKTQLQNDIDQPTSTTGMTSASVAAFNDKLSAARTKIQEIDRVLASHPDVATIRQNVTAANATKTALDQARNGLTVDKAPLENAKNQLQQSIDTQTSTTGMTQDSINAYNAKLTAARNKIQQINQVLAGSPTVDQINTNTSAANQAKSDLDHARQALTPDKAPLQTAKTQLEQSINQPTDTTGMTTASLNAYNQKLQAARQKLTEINQVLNGNPTVQNINDKVAEANQAKDQLNTARQGLTLDRQPAFTTLHGASNLNQAQQNNFTQQINAAPNHAALETIKSNITALNNAMTKLKDSVADNNSIKSGQNYTDATTANKQAYDNAVNAAKGVIGETTNPTMDVNTVNQKAETVKSTKGALDGQQNLQRAKTEATNAITHASDLNQTQKNALTQQVNNAQNVQAVNDIKQTTQSLNTAMTGLKRGVANHNQVVQSDNYVNADTNKKNDYNNAYNHANDIINGNAQHPVITPSDVNNALSNVTSKEQALNGEAKLNAAKQEANTALGQLNNLNNAQRQNLQSQINGAHQIETVNTIKQNATNLNSAMGNLRQAVADKEQVKRTEDYADADTAKQNAYNSAVSSAETIINQTTNPTMSVNDVNSATSAVTTNKNALNGDEKLAQSKTDAASAIDALPHLNNAQKADVKSKINAASNIAGVNTVKQQGTDLNTAMGNLQGAINDEQTTLNSQNYQDATPSKKTAYTNAVQAAKDILNKSNGQNKTKDQVTEAMNQVNSAKNNLDGTRLLDQAKQTAKQQLNNMTHLTTAQKTHLTNQINSGTTVAGVHTAQSNANTLDQAMNTLRQSIANKDATKASEDYVDANNDKQTAYNNAVAAAETIINANSNPEMNPSTITQKAEQVNSSKTALNGDENLATAKLNAKTYLNTLTSITDAQKNNLISQISSATRVSSVDTVKQNAQHLDQAMASLQNGINNESQVKSSEKYRDADTNKQQEYDNAITAAKAILNKQHGPNTAQNAVEAALQRVKTAKNALNGDAKLIAAQNAAKQHLGTLTHITTAQRNDLTNQISQATNLAGVESVKQSANSLDGAMGNLQTAINDKSGTLASQNFLDADEQKRNAYNQAVSNAETILNKQTGPNTAKTAVEQALNNVNSAKHALNGTQNLNNAKQAAITAINGASDLNQHQKDALKAQANGAQRVSNAQDVQRNATELNTAMGQLQHAIADKTTTLASSKFVNADSTKQNVYTTKVTNAEHIISGTPTVVTTPSEVTAAANQVNSAKQELNGDERLRVAKQNANTAIDALTQLNTPQKAKLKEQVGQANRLEDVQSVQTNGQSLNNAMKGLRDSIANETTVKASQNYTDASPNNQSTYNSAVSNAKGIINQTNNPTMDASAITQATTQVNNAKNGLNGAENLRNAQNTAKQNLNTLSHLTNNQKSAISSQIDRAGHVSEVTAAKNAATELNTQMGNLEQAIHDQNTVKQGVNFTDADKAKRDAYTNAVSRAETILNKTQGANTPKQDVEAAIQSVTSAKNALNGDQNVTNAKNAAKHALNNLTSINNAQKRDLTTKIDQATTVSGVEAVSNTGTQLNTAMANLQNGINDKTNTLASENYHDADSDKKTAYTQAVTNAENILNKNSGSNLDKAAVENALSQVTNAKGALNGNHNLEQAKSNANTTINGLQHLTTAQKDKLKQQVQQAQNVAGVDTVKSSANTLNGAMGTLRNSIQDNAATKNGQNYLDATESNKTNYNNAVDSANGVINATSNPNMDANAINQIATQVTSTKNALDGTHNLTQAKQTATNAIDGATNLNKAQKDALKAQVTSAQRVANVTSIQQTANELNTAMGQLQHGIDDENATKQTQKYRDAEQSKKTAYDQAVAAAKAILNKQTGSNSDKAAVDRALQQVTSTKDALNGDAKLAEAKAAAKQNLGTLNHITNAQRTDLEGQINQATTVDGVNTVKTNANTLDGAMNSLQGSINDKDATLRNQNYLDADESKRNAYTQAVTAAEGILNKQTGGNTSKADVDNALNAVTRAKAALNGADNLRNAKTSATNTINGLPHLTQLQKDNLKHQVEQAQNVAGVNGVKDKGNTLNTAMGALRTSIQNDNTTKTSQNYLDASDINKNNYNTAVNNANGVINATNNPNMDANAINGMANQVNTTKAALNGVQNLAQAKTNATNTINNAHDLNQKQKDALKTQVNNAQRVSDANNVQHTATELNGAMTVLKAAIADKERTKASGNYVNADQEKRQAYDSKVTNAENIINGTPNATLTVNDVNSATSQVNAAKTVLNGDNNLRVAKEHANNTIDGLAQLNNAQKAKLKEQVQSATTLDGVQTVKNSSQTLNTAMKGLRDSIANEATIKAGQNYTDASPNNRNEYDSAVTAAKAIINQTSNPTMEPNTITQATSQVTTKEQALNGAQNLAQAKTTAKNNLNNLTSINNAQKDALTRSIDGATTVAGVNQETVKATELNNAMHSLQNGINDETQTKQTQKYLDAEPSKKSAYDQAVNAAKAILTKASGQNVDKAAVEQALQNVNSTKTALNGDAKLNEAKAAAKQTLGTLTHINNAQRTALDNEITQATNVEGVNTVKAKAQQLDGAMGQLETSIRDKDTTLQSQNYQDADDAKRTAYSQAVNAAATILNKTSGGNTPKADVERAMQAVTQANTALNGIQNLERAKQAANTAITNASDLNTKQKEALKAQVTSAGRVSVANGVEHTATELNTAMTALKRAIADKADTKASGNYVNADANKRQAYDEKVTAAENIVSGTPTPTLTPSDVTNAATQVTNAKTQLNGNHNLEVAKQNANTAIDGLTSLNGPQKAKLKEQVGQATTLPNVQTVRDNAQTLNTAMKGLRDSIANEATIKAEQNYTDASPNNRSEYDSAVTAAKAIIGQTSSPTMNAQEINQAKDQVTAKQQALNGQENLTNAQINAKQHLNGLSDLTNAQKDAAKRQIEGATHVSEVTQAQNNADALNTAMTNLKNGIQDQNTIKQGVNFTDADEAKRNAYTNAVTQAEQILNKVQGPNTAKDNVESALQNVQRAKNDLNGNQNVANAKTTAKNALNNLTSINNAQNEALKSQIDSATTVAGVNQVSATASELNTAMSNLQNGINDEAATKAAQKYTDADSDKQTAYNDAVTAAKTLLDKTAGTNDNKAAVEQALQRVNTAKTALNGDARLNQAKNTAKQQLATMSHLTDAQKANLTSQIERGTTVAGVQGIQANAGTLNEAMNQLRQSIASKDATKASEDYHDANTDLQNAYNDAVTNAEGIISATNNPEMNPDTINQKASQVNSAKSALNGDEKLAAAKQTAKSDIGRLTDLNNAQRTAANAEVDQAPNLAAVTAAKNKATSLNTAMGNLKHALAEKDNTKRSVNYTDADQPKQQAYDTAVTQAEAITNANGSNANETQVQAALNQLNQAKNDLNGDNKVAQAKETAKRALASYSNLNNAQSTAATSQIDNATTVAGVTAAQNTANELNTAMGQLQNGINDQNTVKQQVNFTDADQGKKDAYTNAVTNAQGILDKAHGQNMTKAQVEAALNQVTTAKNALNGDANVRQAKSDAKANLGTLTHLNNAQKQDLTSQIEGATTVNGVNGVKTKAQDLDGAMQRLQSAIANKDQTKASENYIDADPTNKTAFDNAITQAESYLNKDHGANKDKQAVEQAIQSVTSTENALNGDANLQRAKTEATQAIDNLTHLNTPQKTALKQQVNAAQRVSGVTDLKNSATSLNNAMDQLKQAIADHDTIVAGGNYTNASPDKQGAYTDAYNAAKNIVNGSPNVITNAADVTAATQRVNNAETGLNGDTNLATAKQQAKDALRQMTHLSDAQKQSITVQIDNATQVTGVQSVKDNATNLDNAMNQLRNSIANKDEVKASQPYVDADRDKQNAYNTAVTSAENIINATSQPTLDPSAVTQAANQVNTNKTALNGAQNLANKKQETTANINQLSHLNNAQKQDLNTQVTNAPNISTVSQVKTKAEQLDQAMERLINGIQDKDQVKQSVNFTDADPEKQTAYNNAVTAAENIINQANGTNANQSQVEAALSTVTTTKQALNGDRKVTDAKNNANQTLSTLDNLNNAQKGAVTGNINQAHTVAEVTQAIQTAQELNTAMGNLKNSLNDKDTTLGSQNFADADPEKKNAYNEAVRNAENILNKSTGTNVSKDQVEAAMNQVNTTKAALNGTQNLEKAKQHANTAIDGLSHLTNAQKEALKQLVQQSTTVAEAQGNEQKANNVDAAMDKLRQSIADNATTKQNQNYTDSSPNKKDAYNNAVTTAQGIIDQTTSPTLDPTVINQAAGQVSTTKNALNGNENLEAAKQQATQSLGSLDNLNNAQKQAVTDQINGAHTVDEANQIKQNAQNLNTAMGNLKQAIADKDATKATVNFTDADQAKQQAYNTAVTNAENIISKANGGNATQTEVEQAIQQVNAAKQALNGNANVQHAKDEATALINSSNDLNQAQKDALKQQVQNATTVAGVNNVKQTAQELNNAMTQLKQGIADKEQTKADGNFVNADPDKQNAYKQAVAKAEALISGTPDVVVTPSEITAALNKVTQAKNDLNGNTNLATTKQNVQHAIDQLPNLNQAQRDEYSKQITQATLVPNVNAIQQAATTLNDAMTQLKQGIANKAQIKGSENYHDADTDKQTAYDNAVTKAEELLKQTTNPTMDPNTIQQALTKVNDTNQALNGNQKLADAKQAAKTNLGTLDHLNDAQKQALTTQVEQAPDIATVNNVKQNAQNLNNAMTNLSNALQDKTETLNSINFTDADQAKKDAYTNAVAHAEGILSKANGSNASQTEVEQAMQRVNEAKQALNGNDNVQRAKDAAKQVITNANDLNQAQKDALKQQVDAAQTVANVNTIKQTAQDLNQAMTQLKQGIADKDQTKANGNFVNADTDKQNAYNNAVAHAEQIISGTPNANVDPQQVAQALQQVTQAKGDLNGNHNLQVAKDNANTAIDQLPNLNQTQKTALKDQVSHAELVTGVNAIKQNADALNNAMGTLKQQIQANSQVPQSVDFTQADQDKQQAYNNAANQAQQIANGTPTPVLTPDAVTQAVTTMNQAKDALNGDEKLAQAKQDAIANLDTLRDLNQPQRDALRNQINQAQALATVEQTKQNAQNVNTAMSNLKQGIANKDTVKASENYHDADADKQTAYTNAVSQAEGIINQTTNPMLNPDDITRALTQVTDAKNGLNGEAKLATEKQNAKDAVNAMTHLNDAQKQALKGQIDQSPEIAIVNQVKQTATSLDHAMDQLSQAINDKAQTLADGNYLNADPDKQNAYKQAVAKAEALLNKQSGTNEVQAQVESITNEVNAAKQALNGNDNLANAKQQAKQQLANLTHLNDAQKQSFESQITQAPLVTDVTTINQKAQALDHAMDQLSQAINDKAQTLADGNYLNADPDKQNAYKQAVAKAEALLNKQSGTNEVQAQVESITNEVNAAKQALNGNDNLANAKQQAKQQLANLTHLNDAQKQSFESQITQAPLVTDVTTINQKAQALDHAMELLRNSVADNQATLASEDYHDATAQRQNDYNQAVTATNNIINQTTSPTMNPDEVNRATTQVNNTKVALDGDENLVAAKQQANNRLDQLDHLNNAQKQQLQSQITQSSDIAAVNGHKQTAESLNTAMGNLINAIADHQTVEQLGNFVNADTDKQTAYTTAVNEAEAMINKQTGQNANQTEVEQAITKVQTTLQALNGDHNLQVAKANATQAIDALTSLNDPQKTALKDQVTAATLVTAVHQIEQNANTLNQAMHGLRESIQDNAATKANSKYINEDQSEQQNYDQAVQAANNIINEQTATLDNNAINQAATTVNTTKAALHGDVKLQNDKDHAKQTVSQLTHLNNAQKHMEDTLIDSETTRTAVNHDLTEAQALDQLMDALQQSIADKDATRASSAYVNAEPNKKQSYDEAVQNAESIIAGLNNPTINKGNVTSATQAVTSSKNALDGVERLAQDKQTAGNSLNHLDQLTPAQQQALENQINNATTRDKVAEIIAQAQALNEAMKALKESIKDQPQTEASSKFINEDQAQKDAYTQAVQHAKDLINKTTDPTLAKSIIDQATQAVTDAKNNLHGDQKLDQDKQRATETLNNLSNLNTPQRQALENQINNAATRGEVAQKLTEAEALNQAMEALRNSIQDQQQTEAGSKFINEDKPQKDAYQAAVQNAKDLINQTNNPTLDKAQVEQLTQAVNQAKDNLHGDQKLADDKQHAVTDLNQLNGLNNPQRQALESQINNAATRDEVAQKLAEAKALDQAMQALRNSIQDQQQTESGSKFINEDKPQKDAYQAAVQNAKDLINQTGNPTLDKSQVEQLTQAVTTAKDNLHGDQKLARDQLQAVTTVNALPNLNHAQQQALTDAINAAPTRTEVAQHVQTATELDHAMETLKNKVDQVNTDKAQPNYTEASTDKKEAVDQALQAAESITDPTNGSNANKDAVDQALTKLQEKVNELNGNERVAEAKTQAKQTIDQLTHLNADQIATAKQNIDQATKLQPIAELVDQATQLNQSMDQLQQAVNEHANVEQTVDYTQADLDKQNAYKQAIADAENVLKQNANKQQVDQALQNILNAKQALNGDERVALAKTNGKHDIEQLNALNNAQQDGFKGRIDQSNDLNQIQQIVDEAKALNRVMDQLSQGITGNEGRTKGSTNYVNADTQVKQVYDEAVDKAKQALDKSTGQNLTAEQVIKLNDAVTAAKKALNGEEKLNNRKSEALQRLDQLTHLNNAQRQLAIQQINNAETLNKASRAINRATKLDNAMGAVQQYIDEQHLGVISSTNYINADDNLKANYDNAIANAAHELDKVQGNAIAKAEAEQLKQNIIDAQNALNGDQNLANAKDKANAFVNSLNGLNQQQQHLAHNAINNADTVSDVTDIVNNQIDLNDAMETLKHLVDNEIPNAEQTVNYQNAEDNAKTNFDDAKRLANTLLNSDNTNVNDINGAIQTVNDAIQNLNGDQRLQDAKDKAIQSINQALANKLKEIEASNATDQDKLIAKNKAEELANSIINNINKATSNQDVSQVQTAGNHAIEQVHANEIPKAKIDANKDVDKQVQALIDEIDRNPILTDKEKQALKDRINQILQQGHNDINNAMTKEEIEQAKAQLGQALQDIKDLVKAKESAKQDIDKQVQALIDEIDRNPILTDKEKQALKDRINQILQQGHNGINNAMTKEEIEQAKAQLGQALQDIKDLVKAKESAKQDIDKQVQALIDEIDRNPNLTDKEKQALKDRINQILQQGHNGINNAMTKEEIEHAKAQLAQALQDIKDLVKAKEDAKNAIKALANAKRDQINSNPDLTLEQKAKALKEIDEAEKRALENIENAQTKDQLNQGLNLGLDDIRNTHVWEVDAQPAVNEIFDATPEQILVNGELIVHRDDIITEQDILAHINLIDQLTAEIIDTPSTATISDSLTAKVEVTLLDGSKVIVNVPVKVVEKELTVVKQQAIESIENAAQQKINEINNHATLTPEQKEAAIAEVNKLKQQAIEQINNAADVHTVEEVQHQEQAHIEQFNPDQFTIDQAKSNAIKSISDAIQHMIDEINASKDLTDKEKQEAISKLNQLKDQSIQAIQRAQSIDEIAQQLEQFKAQLKAANPFAKELENRKKAAISKIKDISTDKIDRIRNSTIGTAEERQAAMNRINEIVLETIKDINNAQTPQQVEAALNNGIARILAVQIVTSDHSKPSSNSDGQSNSHLHVGYGTVNHPFNSSPIGHKKKLDQDDEIDPLHMRHFGDRIGNVIKNALGVVGISGLLASFWFFIAKRRRKEDEEEELEIRDNSKDKKKGSIEGTKHLPLLFAKRRRKEDEEDAIVEEKDSLNNDESLDKVKHTPFFLPKRRRKEDEEDVEVTNENTDEKVLQDNEHSPVLIAKRLKDKDGNVETTTSIESKDEDVPLLLAKKKNQKDNQSKGKKSASKKPSKKVAAKKKKKKSKKNKK.

The first 39 residues, 1–39 (MNYRDKIQKFSIRKYTVGTFSTVIATLVFLGLNTSQAQA), serve as a signal peptide directing secretion. 2 stretches are compositionally biased toward polar residues: residues 41 to 59 (ETNQ…GDTQ) and 67 to 113 (VQNS…SQNE). Disordered stretches follow at residues 41–174 (ETNQ…GNVQ), 246–274 (MPQR…PRSV), and 1340–1372 (IAGN…DGQR). The span at 120–130 (AAATPTQSAKA) shows a compositional bias: low complexity. Basic and acidic residues predominate over residues 132–158 (SKHEQSESRAANKKENDNKATHVESHE). Residues 162-173 (VTASDSSDSGNV) are compositionally biased toward polar residues. Low complexity predominate over residues 248–263 (QRQQTSRRSSRIQTRS). The span at 1356–1372 (YKTTGYSQSNPTSDGQR) shows a compositional bias: polar residues. FIVAR domains follow at residues 2520 to 2576 (AKNH…VNAA), 2606 to 2662 (SKNN…ISDE), 2683 to 2746 (DTHE…VQTA), 2776 to 2832 (AKTK…IAAK), 2860 to 2915 (AKTQ…IRQN), 2943 to 2998 (AKNQ…INTN), 3026 to 3081 (AKTQ…INDK), 3150 to 3208 (AMTK…VNQK), 3276 to 3335 (AMTG…VNNA), 3403 to 3461 (AMGN…VNSA), 3529 to 3587 (AMGN…VTEA), 3655 to 3713 (AMNT…ITQK), 3781 to 3839 (AMAS…VEAA), 3907 to 3965 (AMGN…VEQA), 4033 to 4091 (AMGQ…VTAA), 4159 to 4217 (AMKG…ITQA), 4285 to 4343 (QMGN…VEAA), 4411 to 4469 (AMAN…VENA), 4537 to 4595 (AMGT…INQI), 4663 to 4721 (AMGQ…VDRA), 4789 to 4847 (AMNS…VDNA), 4915 to 4973 (AMGA…INGM), 5041 to 5099 (AMTV…VNSA), 5167 to 5225 (AMKG…ITQA), 5293 to 5351 (AMHS…VEQA), 5419 to 5477 (AMGQ…VERA), 5545 to 5603 (AMTA…VTNA), 5671 to 5729 (AMKG…INQA), 5797 to 5855 (AMTN…VESA), 5923 to 5981 (AMSN…VEQA), 6049 to 6107 (AMNQ…INQK), 6175 to 6232 (AMGN…VQAA), 6300 to 6358 (AMGQ…VEAA), 6426 to 6484 (AMQR…VEQA), 6552 to 6610 (AMDQ…VTAA), 6678 to 6736 (AMNQ…VTQA), 6804 to 6862 (AMER…VEAA), 6930 to 6988 (AMGN…VEAA), 7056 to 7114 (AMDK…INQA), 7182 to 7240 (AMGN…VEQA), 7308 to 7366 (AMTQ…ITAA), 7434 to 7492 (AMTQ…IQQA), 7560 to 7618 (AMTN…VEQA), 7686 to 7744 (AMTQ…VAQA), 7812 to 7870 (AMGT…VTQA), 7938 to 7996 (AMSN…ITRA), 8064 to 8125 (AMDQ…ITNE), 8190 to 8251 (AMDQ…ITNE), 8316 to 8374 (AMEL…VNRA), 8442 to 8500 (AMGN…VEQA), 8568 to 8625 (AMHG…INQA), 8693 to 8751 (LMDA…VTSA), 8819 to 8877 (AMKA…IDQA), 8945 to 9003 (AMEA…VEQL), 9071 to 9129 (AMQA…VEQL), 9197 to 9255 (AMET…VDQA), 9323 to 9377 (SMDQ…VDQA), 9445 to 9504 (VMDQ…VIKL), and 9699 to 9755 (AMET…INGA). Over residues 7066 to 7080 (DNATTKQNQNYTDSS) the composition is skewed to polar residues. Positions 7066–7085 (DNATTKQNQNYTDSSPNKKD) are disordered. Over residues 10492 to 10507 (DHSKPSSNSDGQSNSH) the composition is skewed to polar residues. A disordered region spans residues 10492 to 10530 (DHSKPSSNSDGQSNSHLHVGYGTVNHPFNSSPIGHKKKL). Residues 10552 to 10572 (IKNALGVVGISGLLASFWFFI) traverse the membrane as a helical segment. Positions 10649-10746 (RRKEDEEDVE…KKKKSKKNKK (98 aa)) are disordered. The span at 10664–10674 (TDEKVLQDNEH) shows a compositional bias: basic and acidic residues. The span at 10719 to 10746 (KGKKSASKKPSKKVAAKKKKKKSKKNKK) shows a compositional bias: basic residues.

It localises to the cell membrane. This Staphylococcus aureus (strain MRSA252) protein is Extracellular matrix-binding protein ebh (ebh).